The sequence spans 781 residues: 5-methyltetrahydropteroyltriglutamate--homocysteine methyltransferase (781 aa).

Residues 20–23 and Lys131 contribute to the 5-methyltetrahydropteroyltri-L-glutamate site; that span reads RELK. L-homocysteine contacts are provided by residues 453-455 and Glu506; that span reads IGS. L-methionine-binding positions include 453–455 and Glu506; that span reads IGS. 5-methyltetrahydropteroyltri-L-glutamate contacts are provided by residues 537 to 538 and Trp583; that span reads RC. Asp621 provides a ligand contact to L-homocysteine. Asp621 is an L-methionine binding site. A 5-methyltetrahydropteroyltri-L-glutamate-binding site is contributed by Glu627. Residues His663, Cys665, and Glu687 each coordinate Zn(2+). Residue His716 is the Proton donor of the active site. A Zn(2+)-binding site is contributed by Cys748.

The protein belongs to the vitamin-B12 independent methionine synthase family. Zn(2+) serves as cofactor.

The catalysed reaction is 5-methyltetrahydropteroyltri-L-glutamate + L-homocysteine = tetrahydropteroyltri-L-glutamate + L-methionine. It functions in the pathway amino-acid biosynthesis; L-methionine biosynthesis via de novo pathway; L-methionine from L-homocysteine (MetE route): step 1/1. Functionally, catalyzes the transfer of a methyl group from 5-methyltetrahydrofolate to homocysteine resulting in methionine formation. The protein is 5-methyltetrahydropteroyltriglutamate--homocysteine methyltransferase of Bradyrhizobium diazoefficiens (strain JCM 10833 / BCRC 13528 / IAM 13628 / NBRC 14792 / USDA 110).